The following is a 657-amino-acid chain: tRNA 5-methylaminomethyl-2-thiouridine biosynthesis bifunctional protein MnmC (657 aa).

Residues 1 to 233 (MPRGLILATP…KRDMTVAAFP (233 aa)) are tRNA (mnm(5)s(2)U34)-methyltransferase. The segment at 256 to 657 (LGAGLAGCSV…RALRHGKHAA (402 aa)) is FAD-dependent cmnm(5)s(2)U34 oxidoreductase.

In the N-terminal section; belongs to the methyltransferase superfamily. tRNA (mnm(5)s(2)U34)-methyltransferase family. It in the C-terminal section; belongs to the DAO family. It depends on FAD as a cofactor.

The protein resides in the cytoplasm. It carries out the reaction 5-aminomethyl-2-thiouridine(34) in tRNA + S-adenosyl-L-methionine = 5-methylaminomethyl-2-thiouridine(34) in tRNA + S-adenosyl-L-homocysteine + H(+). In terms of biological role, catalyzes the last two steps in the biosynthesis of 5-methylaminomethyl-2-thiouridine (mnm(5)s(2)U) at the wobble position (U34) in tRNA. Catalyzes the FAD-dependent demodification of cmnm(5)s(2)U34 to nm(5)s(2)U34, followed by the transfer of a methyl group from S-adenosyl-L-methionine to nm(5)s(2)U34, to form mnm(5)s(2)U34. This chain is tRNA 5-methylaminomethyl-2-thiouridine biosynthesis bifunctional protein MnmC, found in Ralstonia nicotianae (strain ATCC BAA-1114 / GMI1000) (Ralstonia solanacearum).